We begin with the raw amino-acid sequence, 439 residues long: Lipase 1 (439 aa).

The N-terminal stretch at methionine 1–glycine 24 is a signal peptide. Residues glycine 28 to isoleucine 60 are disordered. Residues glycine 29–proline 51 show a composition bias toward acidic residues. N-linked (GlcNAc...) asparagine glycosylation is found at asparagine 124 and asparagine 151. The Charge relay system role is filled by serine 197. Asparagine 346 and asparagine 379 each carry an N-linked (GlcNAc...) asparagine glycan. Catalysis depends on histidine 393, which acts as the Charge relay system. Asparagine 426 carries an N-linked (GlcNAc...) asparagine glycan.

Belongs to the AB hydrolase superfamily. Lipase family. In 14 hours embryos expression is seen in the foregut/midgut boundary.

It localises to the secreted. Functionally, could be a digestive enzyme. In Drosophila melanogaster (Fruit fly), this protein is Lipase 1 (Lip1).